The following is a 358-amino-acid chain: Popeye domain-containing protein 1 (358 aa).

Topologically, residues 1 to 48 are extracellular; sequence MNSTESIPLAQSTVAGFTSELESLTPVPSNETTCENWREIHHLVFHVA. Residues asparagine 2 and asparagine 30 are each glycosylated (N-linked (GlcNAc...) asparagine). A helical transmembrane segment spans residues 49–69; sequence NVCFAVGLLIPTTLHLHMILL. Arginine 70 is a topological domain (cytoplasmic). A helical membrane pass occupies residues 71-91; that stretch reads VMLSLGCTLYVVWATLYRCAL. Position 92 (aspartate 92) is a topological domain, extracellular. Residues 93–113 form a helical membrane-spanning segment; the sequence is VMIWNSVFLGINILHLSYLLY. Residues 93-115 are required for interaction with CAV3; that stretch reads VMIWNSVFLGINILHLSYLLYKK. Residues 114 to 358 are Cytoplasmic-facing; sequence KKRPVKIEKE…PDALKVHQLP (245 aa). Residues 136–186 form a required for interaction with KCNK2 region; that stretch reads RVPPDLFRRLTGQFCMIQTLKRGQVYATEDKTSVDDRLSILLKGRMKVSYR. Residues serine 295 and serine 318 each carry the phosphoserine modification. Residues 313–323 show a composition bias toward low complexity; that stretch reads SSSTASLPMSS. Positions 313–350 are disordered; the sequence is SSSTASLPMSSPQQRASAKMKPIEEGVEDDDEVFVSPD.

This sequence belongs to the popeye family. In terms of assembly, homodimer. Homodimerization requires the C-terminus cytoplasmic region. Interacts (via the C-terminus cytoplasmic tail) with TJP1. Interacts (via the C-terminus cytoplasmic tail) with ARHGEF25/GEFT (via the DH domain). Interacts (via the C-terminus cytoplasmic tail) with VAMP3. Interacts with KCNK2; the interaction enhances KCNK2 surface expression and is inhibited by cAMP. Interacts with CAV3. Expressed in epithelial cells, skeletal muscle, heart and intestinal smooth muscle (at protein level). Expressed in fetal and adult heart and skeletal muscle.

It localises to the lateral cell membrane. Its subcellular location is the cell junction. It is found in the tight junction. The protein resides in the membrane. The protein localises to the cell membrane. It localises to the sarcolemma. Its subcellular location is the caveola. Cell adhesion molecule involved in the establishment and/or maintenance of cell integrity. Involved in the formation and regulation of the tight junction (TJ) paracellular permeability barrier in epithelial cells. Plays a role in VAMP3-mediated vesicular transport and recycling of different receptor molecules through its interaction with VAMP3. Plays a role in the regulation of cell shape and movement by modulating the Rho-family GTPase activity through its interaction with ARHGEF25/GEFT. Induces primordial adhesive contact and aggregation of epithelial cells in a Ca(2+)-independent manner. Also involved in striated muscle regeneration and repair and in the regulation of cell spreading. Important for the maintenance of cardiac function. Plays a regulatory function in heart rate dynamics mediated, at least in part, through cAMP-binding and, probably, by increasing cell surface expression of the potassium channel KCNK2 and enhancing current density. Is a caveolae-associated protein important for the preservation of caveolae structural and functional integrity as well as for heart protection against ischemia injury. The protein is Popeye domain-containing protein 1 of Mus musculus (Mouse).